Here is a 542-residue protein sequence, read N- to C-terminus: Probable quinate permease (542 aa).

Residues 1 to 22 lie on the Cytoplasmic side of the membrane; that stretch reads MSILALVEDRPTPKEVYNWRIY. Residues 23–43 traverse the membrane as a helical segment; the sequence is LLAAVASFTSCMIGYDSAFIG. The Extracellular portion of the chain corresponds to 44-66; that stretch reads TTLALSSFREEFGFNTMSKTAVN. Residues 67 to 87 traverse the membrane as a helical segment; it reads LVSANIVSCYQAGAFFGAFLA. The Cytoplasmic segment spans residues 88–97; sequence YPVGHFWGRK. The helical transmembrane segment at 98-118 threads the bilayer; it reads WGLLFSGAIFTLGAGLMLGAD. Topologically, residues 119 to 130 are extracellular; that stretch reads GDRGLGLLYGGR. The helical transmembrane segment at 131–151 threads the bilayer; the sequence is VLAGLGVGAGSNITPIYISEM. Residues 152-159 are Cytoplasmic-facing; the sequence is APPSIRGR. Residues 160–180 form a helical membrane-spanning segment; sequence LVGVYELGWQIGGLVGFWINY. Residues 181-193 lie on the Extracellular side of the membrane; it reads GVSETLAPSHKQW. A helical membrane pass occupies residues 194–214; the sequence is IIPFAVQLIPSGLLLIGAVFL. Residues 215–285 lie on the Cytoplasmic side of the membrane; it reads KESPRWLFSR…AGTNKKVMYR (71 aa). The chain crosses the membrane as a helical span at residues 286–306; sequence LFLGSMLFFWQNGSGINAINY. The Extracellular portion of the chain corresponds to 307 to 325; that stretch reads YSPTVFKSIGLQGANTSMF. The helical transmembrane segment at 326–346 threads the bilayer; sequence STGIFGVVKTVVTFVWLLYLI. Residues 347–352 are Cytoplasmic-facing; that stretch reads DRLGRR. A helical membrane pass occupies residues 353–373; the sequence is LLLLIGAAGASVCLFIVGAYI. Residues 374 to 387 are Extracellular-facing; that stretch reads KIADPASNPTQEMT. The chain crosses the membrane as a helical span at residues 388–408; sequence GGGIAAMFFFYLYTVFYTPSW. Residues 409–456 are Cytoplasmic-facing; it reads NGTPWVMNSEMFEPNMRSLAQACAAASNWFWNFLISRFTPQMFAKMEY. The helical transmembrane segment at 457-477 threads the bilayer; it reads GVWFFFASLMVLSIVFVFFLL. Residues 478-542 lie on the Extracellular side of the membrane; sequence PETKGIPLES…EHLSEDLPKV (65 aa). Residues 519–542 are disordered; it reads IEESGYSKTGDQQVEHLSEDLPKV. A compositionally biased stretch (basic and acidic residues) spans 531–542; that stretch reads QVEHLSEDLPKV.

Belongs to the major facilitator superfamily. Sugar transporter (TC 2.A.1.1) family. Interacts with creB. Ubiquitinated. Deubiquitinated by creB, probably to control its activity or amount.

Its subcellular location is the cell membrane. Integral membrane transporter that imports quinic acid to be catabolized as a carbon source. The sequence is that of Probable quinate permease (qutD) from Neosartorya fischeri (strain ATCC 1020 / DSM 3700 / CBS 544.65 / FGSC A1164 / JCM 1740 / NRRL 181 / WB 181) (Aspergillus fischerianus).